Consider the following 369-residue polypeptide: Putative 2-aminoethylphosphonate import ATP-binding protein PhnT (369 aa).

One can recognise an ABC transporter domain in the interval 19–250 (IVLDSLRVAY…PPNRFAAEFL (232 aa)). 51–58 (GPSGSGKT) contributes to the ATP binding site.

The protein belongs to the ABC transporter superfamily. 2-aminoethylphosphonate importer (TC 3.A.1.11.5) family.

The protein resides in the cell inner membrane. Probably part of the PhnSTUV complex (TC 3.A.1.11.5) involved in 2-aminoethylphosphonate import. Probably responsible for energy coupling to the transport system. This chain is Putative 2-aminoethylphosphonate import ATP-binding protein PhnT (phnT), found in Salmonella typhimurium (strain LT2 / SGSC1412 / ATCC 700720).